The following is a 96-amino-acid chain: Cysteine proteinase (96 aa).

Cysteines 25 and 79 form a disulfide. Catalysis depends on residues H31 and N58.

It belongs to the peptidase C1 family.

This is Cysteine proteinase from Carica papaya (Papaya).